The following is a 265-amino-acid chain: Mlc titration factor A (265 aa).

The Zn(2+) site is built by His111, His148, His152, and Glu211.

Belongs to the MtfA family. In terms of assembly, interacts with Mlc. Requires Zn(2+) as cofactor.

It is found in the cytoplasm. Functionally, involved in the modulation of the activity of the glucose-phosphotransferase system (glucose-PTS). Interacts with the transcriptional repressor Mlc, preventing its interaction with DNA and leading to the modulation of expression of genes regulated by Mlc, including ptsG, which encodes the PTS system glucose-specific EIICB component. Shows zinc-dependent metallopeptidase activity. This is Mlc titration factor A from Escherichia coli O17:K52:H18 (strain UMN026 / ExPEC).